The primary structure comprises 350 residues: MGPHFTLLCAALAGCLLPAEGCVICDPSVVLALKSLEKDYLPGHLDAKHHKAMMERVENAVKDFQELSLNEDAYMGVVDEATLQKGSWSLLKDLKRITDSDVKGDLFVKELFWMLHLQKETFATYVARFQKEAYCPNKCGVMLQTLIWCKNCKKEVHACRKSYDCGERNVEVPQMEDMILDCELNWHQASEGLTDYSFYRVWGNNTETLVSKGKEATLTKPMVGPEDAGSYRCELGSVNSSPATIINFHVTVLPKMIKEEKPSPNIVTPGEATTESSISLQPLQPEKMLASRLLGLLICGSLALITGLTFAIFRRRKVIDFIKSSLFGLGSGAAEQTQVPKEKATDSRQQ.

Positions M1–G21 are cleaved as a signal peptide. Intrachain disulfides connect C22-C149, C25-C152, C135-C159, C139-C165, and C182-C233. The Extracellular portion of the chain corresponds to C22–R292. The tract at residues W148 to R160 is important for interaction with IZUMO1R. An Ig-like C2-type domain is found at E167–T251. N204 carries an N-linked (GlcNAc...) asparagine glycan. Residues L293–F313 form a helical membrane-spanning segment. Residues R314–Q350 lie on the Cytoplasmic side of the membrane. Position 325 is a phosphoserine (S325).

This sequence belongs to the Izumo family. As to quaternary structure, monomer, homodimer; disulfide-linked and homooligomer; depending on the context. Interacts with IZUMO1R/JUNO. IZUMO1 and IZUMO1R/JUNO form a complex with 1:1 stoichiometry. In gamete recognition, IZUMO1R/JUNO first binds to monomeric IZUMO1. The weak, but specific interaction with IZUMO1R/JUNO induces IZUMO1 homodimerization. The process follows a tight binding phase where IZUMO1 bends the entire structure towards the sperm membrane side through a thiol-disulfide exchange reaction. The molecule no longer binds to IZUMO1R/JUNO and instead binds to a putative second oocyte receptor. Interacts with ACE3. Part of a oolemmal binding multimeric complex (IZUMO1 complex) composed at least of IZUMO1 and GLIPR1L1; the complex assemblage is influenced by the maturation status of the male germ cell. Interacts with GLIPR1L1. Interacts with FREY; the interaction retains IZUMO1 at the endoplasmic reticulum membrane and coordinates IZUMO1 complex assembly. Interacts with FCRL3/MAIA (via extracellular domain); the interaction replaces IZUMO1R/JUNO as IZUMO1 receptor after sperm-egg adhesion. Interacts with WDR54. Forms a complex with SPACA6 and TMEM81 on spermatocyte cell membrane. In terms of processing, N-glycosylated. Glycosylation is not essential for fusion and for proper protein trafficking in sperm. Post-translationally, phosphorylated. The cytoplasmic C-terminus is phosphorylated and undergoes phosphorylation changes during epididymal transit. As to expression, sperm-specific (at protein level). Detectable on sperm surface only after the acrosome reaction.

The protein localises to the cell membrane. It localises to the cytoplasmic vesicle. Its subcellular location is the secretory vesicle. It is found in the acrosome membrane. Essential sperm cell-surface protein required for fertilization by acting as a ligand for IZUMO1R/JUNO receptor on egg. The IZUMO1:IZUMO1R/JUNO interaction is a necessary adhesion event between sperm and egg that is required for fertilization but is not sufficient for cell fusion. The ligand-receptor interaction probably does not act as a membrane 'fusogen'. Acts a ligand for the human-specific oolemma epitope FCRL3/MAIA during fertilization. FCRL3/MAIA replaces IZUMO1R/JUNO as IZUMO1 receptor after sperm-egg adhesion, which permits species-specific gamete fusion. Plays a critical role in sperm-oolemma binding prior to plasma membrane fusion. Can mediate cell-cell fusion in cultured mammalian cells independently of its binding to IZUMO1R/JUNO. The protein is Izumo sperm-egg fusion protein 1 of Homo sapiens (Human).